We begin with the raw amino-acid sequence, 406 residues long: Nicotinate phosphoribosyltransferase (406 aa).

Position 227 is a phosphohistidine; by autocatalysis (His-227).

The protein belongs to the NAPRTase family. In terms of processing, transiently phosphorylated on a His residue during the reaction cycle. Phosphorylation strongly increases the affinity for substrates and increases the rate of nicotinate D-ribonucleotide production. Dephosphorylation regenerates the low-affinity form of the enzyme, leading to product release.

It catalyses the reaction nicotinate + 5-phospho-alpha-D-ribose 1-diphosphate + ATP + H2O = nicotinate beta-D-ribonucleotide + ADP + phosphate + diphosphate. The protein operates within cofactor biosynthesis; NAD(+) biosynthesis; nicotinate D-ribonucleotide from nicotinate: step 1/1. Functionally, catalyzes the synthesis of beta-nicotinate D-ribonucleotide from nicotinate and 5-phospho-D-ribose 1-phosphate at the expense of ATP. The polypeptide is Nicotinate phosphoribosyltransferase (Methanosarcina mazei (strain ATCC BAA-159 / DSM 3647 / Goe1 / Go1 / JCM 11833 / OCM 88) (Methanosarcina frisia)).